The following is a 212-amino-acid chain: Protein Rv0786c (212 aa).

The protein is Protein Rv0786c of Mycobacterium tuberculosis (strain ATCC 25618 / H37Rv).